Here is a 435-residue protein sequence, read N- to C-terminus: Xylose isomerase (435 aa).

Active-site residues include His100 and Asp103. Residues Glu231, Glu267, His270, Asp295, Asp306, Asp308, and Asp338 each coordinate Mg(2+).

The protein belongs to the xylose isomerase family. Homotetramer. Mg(2+) serves as cofactor.

The protein resides in the cytoplasm. It catalyses the reaction alpha-D-xylose = alpha-D-xylulofuranose. The sequence is that of Xylose isomerase from Brucella canis (strain ATCC 23365 / NCTC 10854 / RM-666).